Consider the following 733-residue polypeptide: SWR1-complex protein 4 (733 aa).

Disordered regions lie at residues 1 to 34 (MTSH…RPNL) and 98 to 128 (PDGT…DSSF). In terms of domain architecture, SANT spans 146 to 217 (NTNLKHPDWT…DLKARYYEVA (72 aa)). The stretch at 247-299 (KQEQNRKRFAENTLKRSSDEAREEEALLLEIKRIMARTERFNEERRELYNRLD) forms a coiled coil. Residues 371–384 (AASRRESLAASSTA) are compositionally biased toward low complexity. Disordered stretches follow at residues 371-488 (AASR…GSGP) and 564-733 (KKAE…KQKK). Basic and acidic residues-rich tracts occupy residues 387 to 423 (NDHH…DRHG), 463 to 484 (PERR…HDRL), 564 to 589 (KKAE…KGGE), and 610 to 653 (DDAK…KGEE). The span at 699–710 (GSSSGAGASSGA) shows a compositional bias: low complexity.

This sequence belongs to the SWC4 family. In terms of assembly, component of the SWR1 chromatin-remodeling complex and of the NuA4 histone acetyltransferase complex.

It is found in the nucleus. Component of the SWR1 complex which mediates the ATP-dependent exchange of histone H2A for the H2A variant H2A.Z leading to transcriptional regulation of selected genes by chromatin remodeling. Component of the NuA4 histone acetyltransferase complex which is involved in transcriptional activation of selected genes principally by acetylation of nucleosomal histone H4 and H2A. The NuA4 complex is also involved in DNA repair. This chain is SWR1-complex protein 4 (crc-1), found in Neurospora crassa (strain ATCC 24698 / 74-OR23-1A / CBS 708.71 / DSM 1257 / FGSC 987).